A 242-amino-acid polypeptide reads, in one-letter code: Leucyl/phenylalanyl-tRNA--protein transferase (242 aa).

It belongs to the L/F-transferase family.

Its subcellular location is the cytoplasm. It catalyses the reaction N-terminal L-lysyl-[protein] + L-leucyl-tRNA(Leu) = N-terminal L-leucyl-L-lysyl-[protein] + tRNA(Leu) + H(+). It carries out the reaction N-terminal L-arginyl-[protein] + L-leucyl-tRNA(Leu) = N-terminal L-leucyl-L-arginyl-[protein] + tRNA(Leu) + H(+). The catalysed reaction is L-phenylalanyl-tRNA(Phe) + an N-terminal L-alpha-aminoacyl-[protein] = an N-terminal L-phenylalanyl-L-alpha-aminoacyl-[protein] + tRNA(Phe). Functionally, functions in the N-end rule pathway of protein degradation where it conjugates Leu, Phe and, less efficiently, Met from aminoacyl-tRNAs to the N-termini of proteins containing an N-terminal arginine or lysine. The protein is Leucyl/phenylalanyl-tRNA--protein transferase of Edwardsiella ictaluri (strain 93-146).